The chain runs to 178 residues: Large ribosomal subunit protein uL6 (178 aa).

It belongs to the universal ribosomal protein uL6 family. Part of the 50S ribosomal subunit.

In terms of biological role, this protein binds to the 23S rRNA, and is important in its secondary structure. It is located near the subunit interface in the base of the L7/L12 stalk, and near the tRNA binding site of the peptidyltransferase center. This Enterococcus faecalis (strain ATCC 700802 / V583) protein is Large ribosomal subunit protein uL6.